A 96-amino-acid chain; its full sequence is Glutamyl-tRNA(Gln) amidotransferase subunit C (96 aa).

This sequence belongs to the GatC family. Heterotrimer of A, B and C subunits.

It catalyses the reaction L-glutamyl-tRNA(Gln) + L-glutamine + ATP + H2O = L-glutaminyl-tRNA(Gln) + L-glutamate + ADP + phosphate + H(+). The catalysed reaction is L-aspartyl-tRNA(Asn) + L-glutamine + ATP + H2O = L-asparaginyl-tRNA(Asn) + L-glutamate + ADP + phosphate + 2 H(+). Functionally, allows the formation of correctly charged Asn-tRNA(Asn) or Gln-tRNA(Gln) through the transamidation of misacylated Asp-tRNA(Asn) or Glu-tRNA(Gln) in organisms which lack either or both of asparaginyl-tRNA or glutaminyl-tRNA synthetases. The reaction takes place in the presence of glutamine and ATP through an activated phospho-Asp-tRNA(Asn) or phospho-Glu-tRNA(Gln). The protein is Glutamyl-tRNA(Gln) amidotransferase subunit C of Neisseria meningitidis serogroup B (strain ATCC BAA-335 / MC58).